An 811-amino-acid chain; its full sequence is LPS-assembly protein LptD (811 aa).

Residues 1 to 17 (MTEPNRARKTRQRTAFA) form the signal peptide. Positions 1–22 (MTEPNRARKTRQRTAFAAPDQR) are disordered.

This sequence belongs to the LptD family. In terms of assembly, component of the lipopolysaccharide transport and assembly complex. Interacts with LptE and LptA.

It localises to the cell outer membrane. Together with LptE, is involved in the assembly of lipopolysaccharide (LPS) at the surface of the outer membrane. This chain is LPS-assembly protein LptD, found in Ralstonia nicotianae (strain ATCC BAA-1114 / GMI1000) (Ralstonia solanacearum).